Consider the following 491-residue polypeptide: Keratin, type I cytoskeletal 39 (491 aa).

A head region spans residues 1–96 (MDTKGCTTTN…WYGEGINSNE (96 aa)). Positions 96–407 (EKETMQILNE…SLLESSDGKR (312 aa)) constitute an IF rod domain. Residues 97–131 (KETMQILNERLANYLQKVRMLERENAELESKIQEE) are coil 1A. The interval 132 to 142 (SNKELPVLCPD) is linker 1. The coil 1B stretch occupies residues 143–243 (YLSYYTTIEE…HKEEINSLQC (101 aa)). A linker 12 region spans residues 244–259 (QLGERLDIEVTAAPSA). The segment at 260-403 (DLNQVLQEMR…TTYRSLLESS (144 aa)) is coil 2. A tail region spans residues 404–491 (DGKRPCYPRA…PCFIIRPAKV (88 aa)).

It belongs to the intermediate filament family. As to quaternary structure, heterotetramer of two type I and two type II keratins. In terms of tissue distribution, expressed in skin and scalp. In the hair follicle, it is present in the upper hair cuticle and the upper cortex. Also present in the in the upper portion of beard hairs (at protein level).

Functionally, may play a role in late hair differentiation. The chain is Keratin, type I cytoskeletal 39 (KRT39) from Homo sapiens (Human).